The sequence spans 190 residues: MDAPVKMIVGLGNPGRTYEDTRHNAGFMVLDRLAARWGAVFKADRQRKCEVAAGPGVLLVKPSTFMNESGLCVGPMMRFFKLDPRSVFVIHDEVDFPLGVIKLREKGSAGGHNGIKSLIAHMGTQEFPRLRFGIGQPRGKGEMIGHVLGKFRPEERELLDVTLGKAEDAVLYTMEHGITRAGNIFNAVPG.

Residue Y18 participates in tRNA binding. The active-site Proton acceptor is H23. Positions 65, 67, and 113 each coordinate tRNA.

It belongs to the PTH family. As to quaternary structure, monomer.

It localises to the cytoplasm. The catalysed reaction is an N-acyl-L-alpha-aminoacyl-tRNA + H2O = an N-acyl-L-amino acid + a tRNA + H(+). In terms of biological role, hydrolyzes ribosome-free peptidyl-tRNAs (with 1 or more amino acids incorporated), which drop off the ribosome during protein synthesis, or as a result of ribosome stalling. Its function is as follows. Catalyzes the release of premature peptidyl moieties from peptidyl-tRNA molecules trapped in stalled 50S ribosomal subunits, and thus maintains levels of free tRNAs and 50S ribosomes. The sequence is that of Peptidyl-tRNA hydrolase from Akkermansia muciniphila (strain ATCC BAA-835 / DSM 22959 / JCM 33894 / BCRC 81048 / CCUG 64013 / CIP 107961 / Muc).